A 270-amino-acid polypeptide reads, in one-letter code: A-type potassium channel modulatory protein KCNIP2 (270 aa).

Basic and acidic residues predominate over residues 1 to 17 (MRGQGRKESLSDSRDLD). Residues 1 to 33 (MRGQGRKESLSDSRDLDGSYDQLTGHPPGPTKK) form a disordered region. Serine 9 bears the Phosphoserine mark. S-palmitoyl cysteine attachment occurs at residues cysteine 45 and cysteine 46. The EF-hand 1; degenerate domain occupies 81–137 (FELSTVCHRPEGLEQLQEQTKFTRKELQVLYRGFKNECPSGIVNEENFKQIYSQFFP). EF-hand domains follow at residues 140-175 (DSSTYATFLFNAFDTNHDGSVSFEDFVAGLSVILRG), 176-211 (TIDDRLNWAFNLYDLNKDGCITKEEMLDIMKSIYDM), and 224-259 (APREHVESFFQKMDRNKDGVVTIEEFIESCQKDENI). Residues aspartate 153, asparagine 155, aspartate 157, serine 159, aspartate 164, aspartate 189, asparagine 191, aspartate 193, cysteine 195, glutamate 200, aspartate 237, asparagine 239, aspartate 241, and glutamate 248 each contribute to the Ca(2+) site. The segment at 257-270 (ENIMRSMQLFDNVI) is interaction with KCND2.

This sequence belongs to the recoverin family. In terms of assembly, component of heteromultimeric potassium channels. Identified in potassium channel complexes containing KCND1, KCND2, KCND3, KCNIP1, KCNIP2, KCNIP3, KCNIP4, DPP6 and DPP10. The KCND2-KCNIP2 channel complex contains four KCND2 and four KCNIP2 subunits. Interacts with KCND2. Probably part of a complex consisting of KCNIP1, KCNIP2 isoform 3 and KCND2. At least isoform 2 and isoform 3 can self-associate to form homodimers and homotetramers. Isoform 3 interacts with KCNIP1 in a calcium-dependent manner. Interacts with KCND3; each KCNIP2 monomer interacts with two adjacent KCND3 subunits, through both the N-terminal inactivation ball of a KCND3 subunit and a C-terminal helix from the adjacent KCND3 subunit, clamping them together; this interaction modulates the channel gating kinetics. Post-translationally, palmitoylated. Palmitoylation enhances association with the plasma membrane. As to expression, expressed in heart ventricle with isoform 1 as most prominent form.

Its subcellular location is the cell membrane. Its function is as follows. Regulatory subunit of Kv4/D (Shal)-type voltage-gated rapidly inactivating A-type potassium channels. Modulates channel density, inactivation kinetics and rate of recovery from inactivation in a calcium-dependent and isoform-specific manner. Involved in KCND2 and KCND3 trafficking to the cell surface. May be required for the expression of I(To) currents in the heart. The protein is A-type potassium channel modulatory protein KCNIP2 of Mustela putorius furo (European domestic ferret).